The chain runs to 170 residues: Cyclic pyranopterin monophosphate synthase (170 aa).

Residues 89-91 (LCH) and 125-126 (ME) each bind substrate. Asp140 is a catalytic residue.

The protein belongs to the MoaC family. As to quaternary structure, homohexamer; trimer of dimers.

It carries out the reaction (8S)-3',8-cyclo-7,8-dihydroguanosine 5'-triphosphate = cyclic pyranopterin phosphate + diphosphate. The protein operates within cofactor biosynthesis; molybdopterin biosynthesis. Functionally, catalyzes the conversion of (8S)-3',8-cyclo-7,8-dihydroguanosine 5'-triphosphate to cyclic pyranopterin monophosphate (cPMP). In Streptomyces coelicolor (strain ATCC BAA-471 / A3(2) / M145), this protein is Cyclic pyranopterin monophosphate synthase.